The sequence spans 248 residues: MERASLIQKAKLAEQAERYEDMAAFMKGAVEKGEELSCEERNLLSVAYKNVVGGQRAAWRVLSSIEQKSNEEGSEEKGPEVREYREKVETELQGVCDTVLGLLDSHLIKEAGDAESRVFYLKMKGDYYRYLAEVATGDDKKRIIDSARSAYQEAMDISKKEMPPTNPIRLGLALNFSVFHYEIANSPEEAISLAKTTFDEAMADLHTLSEDSYKDSTLIMQLLRDNLTLWTADNAGEEGGEAPQEPQS.

A phosphoserine mark is found at S5, S74, and S248.

The protein belongs to the 14-3-3 family. Homodimer. Interacts with KRT17 and SAMSN1. Found in a complex with XPO7, EIF4A1, ARHGAP1, VPS26A, VPS29 and VPS35. Interacts with GAB2. Interacts with SRPK2. Interacts with COPS6. Interacts with COP1; this interaction leads to proteasomal degradation. Interacts with the 'Thr-369' phosphorylated form of DAPK2. Interacts with PI4KB. Interacts with SLITRK1. Interacts with LRRK2; this interaction is dependent on LRRK2 phosphorylation. Interacts with PKP3 (via N-terminus); the interaction maintains the cytoplasmic pool of PKP3, facilitates PKP3 exchange at desmosomes and restricts PKP3 localization to existing desmosome cell junctions. Interacts with LCP2. Post-translationally, ubiquitinated. Ubiquitination by RFFL induces proteasomal degradation and indirectly regulates p53/TP53 activation. Present mainly in tissues enriched in stratified squamous keratinizing epithelium.

It is found in the cytoplasm. It localises to the nucleus. Its subcellular location is the secreted. Functionally, adapter protein implicated in the regulation of a large spectrum of both general and specialized signaling pathways. Binds to a large number of partners, usually by recognition of a phosphoserine or phosphothreonine motif. Binding generally results in the modulation of the activity of the binding partner. Promotes cytosolic retention of GBP1 GTPase by binding to phosphorylated GBP1, thereby inhibiting the innate immune response. Also acts as a TP53/p53-regulated inhibitor of G2/M progression. When bound to KRT17, regulates protein synthesis and epithelial cell growth by stimulating Akt/mTOR pathway. Acts to maintain desmosome cell junction adhesion in epithelial cells via interacting with and sequestering PKP3 to the cytoplasm, thereby restricting its translocation to existing desmosome structures and therefore maintaining desmosome protein homeostasis. Also acts to facilitate PKP3 exchange at desmosome plaques, thereby maintaining keratinocyte intercellular adhesion. May also regulate MDM2 autoubiquitination and degradation and thereby activate p53/TP53. The polypeptide is 14-3-3 protein sigma (SFN) (Homo sapiens (Human)).